We begin with the raw amino-acid sequence, 197 residues long: MKINKAEFVTSAVAPDHYPVHELPEVALAGRSNVGKSSFINKICQRKALARTSSKPGKTQTLNFFNINDEIMFVDVPGYGYAKVSKTEREKWGVMMEQYLTSQEALRGVVLLVDIRHDPTGDDVTMYNFLKHYEIPVIVVATKLDKIKKSQRQKHEAAVKRKLQFDPSDRFVAFSAETAEGKDEAWKAIYALITEGE.

Positions 22–195 (ELPEVALAGR…WKAIYALITE (174 aa)) constitute an EngB-type G domain. Residues 30–37 (GRSNVGKS), 57–61 (GKTQT), 75–78 (DVPG), 142–145 (TKLD), and 174–176 (FSA) each bind GTP. The Mg(2+) site is built by Ser37 and Thr59.

It belongs to the TRAFAC class TrmE-Era-EngA-EngB-Septin-like GTPase superfamily. EngB GTPase family. Mg(2+) serves as cofactor.

Necessary for normal cell division and for the maintenance of normal septation. In Exiguobacterium sp. (strain ATCC BAA-1283 / AT1b), this protein is Probable GTP-binding protein EngB.